The chain runs to 1276 residues: Histone-lysine N-methyltransferase PRDM16 (1276 aa).

Residues M1–L10 are compositionally biased toward basic residues. Residues M1–Y68 are disordered. The 130-residue stretch at A82–K211 folds into the SET domain. The C2H2-type 1; atypical zinc-finger motif lies at F230 to C253. 5 C2H2-type zinc fingers span residues H281–H303, Y309–H331, F337–H360, H366–H388, and F394–H416. A C2H2-type 7; atypical zinc finger spans residues I423–C445. Disordered regions lie at residues S533 to G657 and P772 to D804. Positions A561–T570 are enriched in polar residues. Residues P575 to D597 show a composition bias toward basic and acidic residues. Low complexity predominate over residues T609–D624. Residues D632 to S642 show a composition bias toward basic and acidic residues. The interaction with CTBP1, CTBP2 and ZNF516 stretch occupies residues D679–S1038. The segment at P739–L1276 is mediates interaction with SKI and regulation of TGF-beta signaling. C2H2-type zinc fingers lie at residues Y951–H973, Y979–H1002, and F1008–H1032. Disordered stretches follow at residues E1033–L1065 and A1105–A1163. Positions H1047 to E1058 are enriched in polar residues. The span at E1116 to S1133 shows a compositional bias: acidic residues.

It belongs to the PRDM16 family. In terms of assembly, interacts with CEBPA, CEBPB and CEBPD; the interaction is direct. Interacts with PPARG and PPARA; controls brown adipocytes differentiation. Interacts with CTBP1 and CTBP2; represses the expression of WAT-specific genes. Interacts with PPARGC1A and PPARGC1B; interaction with PPARGC1A or PPARGC1B activates the transcription of BAT-specific gene. Interacts with HDAC1, SKI, SMAD2 and SMAD3; the interaction with SKI promotes the recruitment of SMAD3-HDAC1 complex on the promoter of TGF-beta target genes. Interacts with ZNF516; the interaction is direct and may play a role in the transcription of brown adipose tissue-specific gene. Expressed in uterus and kidney. Expressed in both cardiomyocytes and interstitial cells.

The protein resides in the nucleus. It localises to the cytoplasm. The catalysed reaction is L-lysyl(9)-[histone H3] + S-adenosyl-L-methionine = N(6)-methyl-L-lysyl(9)-[histone H3] + S-adenosyl-L-homocysteine + H(+). Its function is as follows. Binds DNA and functions as a transcriptional regulator. Displays histone methyltransferase activity and monomethylates 'Lys-9' of histone H3 (H3K9me1) in vitro. Probably catalyzes the monomethylation of free histone H3 in the cytoplasm which is then transported to the nucleus and incorporated into nucleosomes where SUV39H methyltransferases use it as a substrate to catalyze histone H3 'Lys-9' trimethylation. Likely to be one of the primary histone methyltransferases along with MECOM/PRDM3 that direct cytoplasmic H3K9me1 methylation. Functions in the differentiation of brown adipose tissue (BAT) which is specialized in dissipating chemical energy in the form of heat in response to cold or excess feeding while white adipose tissue (WAT) is specialized in the storage of excess energy and the control of systemic metabolism. Together with CEBPB, regulates the differentiation of myoblastic precursors into brown adipose cells. Functions as a repressor of TGF-beta signaling. Functionally, binds DNA and functions as a transcriptional regulator. Functions as a repressor of TGF-beta signaling. May regulate granulocyte differentiation. The chain is Histone-lysine N-methyltransferase PRDM16 from Homo sapiens (Human).